Consider the following 476-residue polypeptide: Glutamate--tRNA ligase 1 (476 aa).

The 'HIGH' region signature appears at 9-19; that stretch reads PSPTGFLHIGG. A 'KMSKS' region motif is present at residues 238–242; it reads KLSKR. ATP is bound at residue Lys-241.

This sequence belongs to the class-I aminoacyl-tRNA synthetase family. Glutamate--tRNA ligase type 1 subfamily. Monomer.

It localises to the cytoplasm. It carries out the reaction tRNA(Glu) + L-glutamate + ATP = L-glutamyl-tRNA(Glu) + AMP + diphosphate. Catalyzes the attachment of glutamate to tRNA(Glu) in a two-step reaction: glutamate is first activated by ATP to form Glu-AMP and then transferred to the acceptor end of tRNA(Glu). This chain is Glutamate--tRNA ligase 1, found in Bartonella tribocorum (strain CIP 105476 / IBS 506).